A 193-amino-acid chain; its full sequence is Transcriptional activator GvpE2 (193 aa).

143-148 serves as a coordination point for DNA; the sequence is KRKVYR. The leucine-zipper stretch occupies residues 153-184; the sequence is QAAIEHVDSVVLQLLTFAVGLQTIMADCIVNQ.

Homodimer. Interacts with endogenous GvpD, also with GvpD from H.mediterranei.

Its subcellular location is the cytoplasm. With respect to regulation, degraded once GvpD is translated; degradation requires 'Arg-494' of GvpD; tested in transgenic H.volcanii. Fusion of green fluorescent protein to its C-terminus partially protects it from degradation. Functionally, plays a regulatory role in gas vesicle synthesis, required to activate transcription of the c-gvpA operon. Gas vesicles are hollow, gas filled proteinaceous nanostructures found in several microbial planktonic microorganisms. They allow positioning of halobacteria at the optimal depth for growth in the poorly aerated, shallow brine pools of their habitat. Expression of 2 c-vac DNA fragments containing 2 divergently transcribed regions (gvpE-gvpF-gvpG-gvpH-gvpI-gvpJ-gvpK-gvpL-gvpM and gvpA-gvpC-gvpN-gvpO) allows H.volcanii to produce gas vesicles. All site-directed mutagenesis is tested in H.volcanii. This chain is Transcriptional activator GvpE2, found in Halobacterium salinarum (strain ATCC 700922 / JCM 11081 / NRC-1) (Halobacterium halobium).